A 1039-amino-acid polypeptide reads, in one-letter code: MEGFTLETHASRIIEVPLLGQEDQSVEIDCSSLPSDATELCEILVNEQAPREFWTKFAHEYYIRGLREQAILILKSGLETLKDSESLCILNANIAAIYLSMAREAMLKKDTDLRDEQLRNVRTYLEAANNIDSKSEINVLLHGIYRILLNPTDKESLENAARCFDFVLQKSGGNILGFLGKARILYAKGNYRSALKLYQRALVSNPQFKPDPRIGIGLCFWNLDMKTDALSAWTRVQQLDPKNTVVDTYIGLYYYDLAFQNVNNDSFVQNYGKALQHIQRAFKTRNNDPVASSILERYVYSKKNYEGCIKLAENVIQNSFSSSLIADGYYWMGRAYHQMGNNEKAMASYQKAKAADDRHLLSSVGIGQIQILQNDLTSAKLTFERIAEQNQSCFEALVVLGCLHASDSKPDLTKARMLLDRAFNLVGSSKLPRVVDSDLYITQARLWEKEDTKKSLGFLTRALDFLESAHMSVGPELLNNIAVLQYHLGLIPEAHGNIIKAKSVLPDANPELSLLLDYNLARCEEELGNTSVASEAYVSILEKHPSFIDARIRKCLLQLSNPNEETFKEIRHIMNADSQNLEVRAFFGWYLSKQKRRPVEDPEVRHCSQTLRHWHDDIYSLVQLGNAYMRQAREFRVHNDREKLKRQKLYIKAIQSYDQAIKFDPKNAHAAQGIAIILAQNRQFSKALLILSKVREAIKDATTLINIGNCLAELKQFSRAIEVFETVYSSTGESDTYGVLSCLGRVWLQRGRESKNVDYLKESVRYATLALEKNPENPSLLFNVAFVQFQLCELIRQKPENSRTVEDLNFAMQQLDASIETFTKLVSVEHPPYSPTSIEQRAKMAKNTTKRQLERAIQAQIEYEKSVAAKLEDARIQREKEKARRLAEEEALLKEKQERERQLQEERQKMQEEVLEWRKSQQKASEDDMSLSDDEEKQSGKKKKKDRKKRKSKSKQESSDSGVSEDDEIPLSDARNKTKKRRVNRRVISEEYTFDQDSDAEGNQEEEVSRTIEEKQDNDITDNQDDNKELNLFSEEDEE.

TPR repeat units lie at residues Arg-51–Ser-84, Ile-175–Phe-208, Pro-210–Asn-243, Gly-251–Asp-288, Ala-326–His-359, Leu-361–Cys-393, Ser-437–Ala-469, Leu-514–Phe-547, Glu-634–Asn-667, Ala-701–Ser-734, Tyr-737–Ala-770, and Pro-799–Pro-832. Residues Ile-838 to Met-929 adopt a coiled-coil conformation. Residues Glu-912–Glu-1039 are disordered. Over residues Asp-927–Glu-936 the composition is skewed to acidic residues. A phosphoserine mark is found at Ser-930 and Ser-932. A compositionally biased stretch (basic residues) spans Gly-940–Lys-953. Residues Ser-959, Ser-961, Ser-964, and Ser-998 each carry the phosphoserine modification. Over residues Tyr-992–Glu-1006 the composition is skewed to acidic residues. Over residues Glu-1007–Asn-1018 the composition is skewed to basic and acidic residues.

Its function is as follows. Involved in promoting potassiumm ion uptake. The sequence is that of Tetratricopeptide repeat protein 1 (tpr1) from Schizosaccharomyces pombe (strain 972 / ATCC 24843) (Fission yeast).